Here is a 79-residue protein sequence, read N- to C-terminus: Acyl carrier protein (79 aa).

Residues Ser2–Val77 enclose the Carrier domain. At Ser37 the chain carries O-(pantetheine 4'-phosphoryl)serine.

Belongs to the acyl carrier protein (ACP) family. Post-translationally, 4'-phosphopantetheine is transferred from CoA to a specific serine of apo-ACP by AcpS. This modification is essential for activity because fatty acids are bound in thioester linkage to the sulfhydryl of the prosthetic group.

It is found in the cytoplasm. The protein operates within lipid metabolism; fatty acid biosynthesis. Its function is as follows. Carrier of the growing fatty acid chain in fatty acid biosynthesis. This chain is Acyl carrier protein, found in Janthinobacterium sp. (strain Marseille) (Minibacterium massiliensis).